The sequence spans 441 residues: Tol-Pal system protein TolB (441 aa).

Positions 1–23 (MRNAIATVLLGLAMLLPVGAVQA) are cleaved as a signal peptide. A disordered region spans residues 420 to 441 (RNLKPVKTPDGASDPSWSPLQN).

The protein belongs to the TolB family. In terms of assembly, the Tol-Pal system is composed of five core proteins: the inner membrane proteins TolA, TolQ and TolR, the periplasmic protein TolB and the outer membrane protein Pal. They form a network linking the inner and outer membranes and the peptidoglycan layer.

The protein localises to the periplasm. Part of the Tol-Pal system, which plays a role in outer membrane invagination during cell division and is important for maintaining outer membrane integrity. The chain is Tol-Pal system protein TolB from Ruegeria sp. (strain TM1040) (Silicibacter sp.).